The primary structure comprises 91 residues: Small ribosomal subunit protein uS19 (91 aa).

This sequence belongs to the universal ribosomal protein uS19 family.

In terms of biological role, protein S19 forms a complex with S13 that binds strongly to the 16S ribosomal RNA. The polypeptide is Small ribosomal subunit protein uS19 (Psychrobacter sp. (strain PRwf-1)).